We begin with the raw amino-acid sequence, 579 residues long: Pentatricopeptide repeat-containing protein At2g15690, mitochondrial (579 aa).

The N-terminal 49 residues, 1 to 49, are a transit peptide targeting the mitochondrion; the sequence is MSSLMAIRCARTQNIVTIGSLLQLRSSFPRLSSQFHFSGTLNSIPIKHL. 2 stretches are compositionally biased toward polar residues: residues 56-71 and 78-103; these read NDYH…SQHQ and SFDS…TQHG. The interval 56-208 is disordered; the sequence is NDYHQNPQSG…QMNEVAPPPS (153 aa). Low complexity-rich tracts occupy residues 117 to 136 and 148 to 199; these read GGQR…QMSQ and RPQY…SPNQ. 5 PPR repeats span residues 235–269, 270–300, 301–335, 336–371, and 372–402; these read DREC…KFRG, DPKL…MVDK, DMDS…GLKP, NEET…GISP, and KTEH…LPFE. Residues 485–579 are type DYW motif; the sequence is GVVYVPDTRF…DGKCSCGDYW (95 aa).

The protein belongs to the PPR family. PCMP-H subfamily.

Its subcellular location is the mitochondrion. The protein is Pentatricopeptide repeat-containing protein At2g15690, mitochondrial (PCMP-H66) of Arabidopsis thaliana (Mouse-ear cress).